Here is a 398-residue protein sequence, read N- to C-terminus: Cholinephosphotransferase 1 (398 aa).

Alanine 2 is modified (N-acetylalanine). Residues 2 to 62 (AAGAGARPAP…LLQWIPLWIA (61 aa)) are Cytoplasmic-facing. The helical transmembrane segment at 63 to 83 (PNTITLFGLAINLFTTLVLIF) threads the bilayer. Asparagine 64 provides a ligand contact to CDP-choline. Residues 84 to 93 (YCPTVTEEAP) lie on the Lumenal side of the membrane. Residues 94–118 (YWTYLLCALGLFIYQSLDAIDGKQA) form a helical membrane-spanning segment. Aspartate 111 and aspartate 114 together coordinate Mg(2+). Residue arginine 119 participates in CDP-choline binding. At 119–125 (RRTNSCS) the chain is on the cytoplasmic side. A helical membrane pass occupies residues 126-150 (PLGELFDHGCDSLSTVFMAIGASIA). Position 132 (aspartate 132) interacts with Mg(2+). Catalysis depends on histidine 133, which acts as the Proton acceptor. Position 136 (aspartate 136) interacts with Mg(2+). Residues 151 to 160 (VRLGTHPDWL) lie on the Lumenal side of the membrane. Residues 161–179 (FFCSFVGMFMFYCAHWQTY) form a helical membrane-spanning segment. At 180 to 190 (VSGVLRFGRVD) the chain is on the cytoplasmic side. Residues 191–207 (VTEIQVALVIVFLLSTF) traverse the membrane as a helical segment. Over 208 to 222 (GGAMMWDYTIPILEI) the chain is Lumenal. A helical membrane pass occupies residues 223–248 (KLKILPVLGVVGGLIFSCSNYFHVIL). The Cytoplasmic portion of the chain corresponds to 249–265 (HGGVGKNGSTIAGTSVL). Residues 266 to 281 (SPGLHIGLIIILAIMI) form a helical membrane-spanning segment. The Lumenal portion of the chain corresponds to 282–293 (YKKSATNVFEKH). The chain crosses the membrane as a helical span at residues 294-316 (PCLYTLMFGCVFAKVAQKLVIAH). The Cytoplasmic portion of the chain corresponds to 317–329 (MTKSELYLQDTVF). A helical membrane pass occupies residues 330–339 (IGPGLLFLDQ). The Lumenal portion of the chain corresponds to 340–346 (YFNNFID). Residues 347 to 376 (EYVVLWIAMVITSFDMMIYFSSLCLQISRH) form a helical membrane-spanning segment. Residues 377–398 (LHLSIFKTSYQQAPEQVHKHID) lie on the Cytoplasmic side of the membrane.

It belongs to the CDP-alcohol phosphatidyltransferase class-I family. It depends on Mg(2+) as a cofactor. The cofactor is Mn(2+).

It localises to the golgi apparatus membrane. It catalyses the reaction CDP-choline + a 1,2-diacyl-sn-glycerol = a 1,2-diacyl-sn-glycero-3-phosphocholine + CMP + H(+). It carries out the reaction 1-octadecanoyl-2-(5Z,8Z,11Z,14Z-eicosatetraenoyl)-sn-glycerol + CDP-choline = 1-octadecanoyl-2-(5Z,8Z,11Z,14Z-eicosatetraenoyl)-sn-glycero-3-phosphocholine + CMP + H(+). The catalysed reaction is 1-hexadecanoyl-2-(9Z-octadecenoyl)-sn-glycerol + CDP-choline = 1-hexadecanoyl-2-(9Z-octadecenoyl)-sn-glycero-3-phosphocholine + CMP + H(+). The enzyme catalyses 1-hexadecanoyl-2-(4Z,7Z,10Z,13Z,16Z,19Z-docosahexaenoyl)-sn-glycerol + CDP-choline = 1-hexadecanoyl-2-(4Z,7Z,10Z,13Z,16Z,19Z-docosahexaenoyl)-sn-glycero-3-phosphocholine + CMP + H(+). It catalyses the reaction 1,2-dioctanoyl-sn-glycerol + CDP-choline = 1,2-dioctanoyl-sn-glycero-3-phosphocholine + CMP + H(+). The protein operates within phospholipid metabolism; phosphatidylcholine biosynthesis; phosphatidylcholine from phosphocholine: step 2/2. Catalyzes the final step of de novo phosphatidylcholine (PC) synthesis, i.e. the transfer of choline phosphate from CDP-choline to the free hydroxyl of a diacylglycerol (DAG), producing a PC. It thereby plays a central role in the formation and maintenance of vesicular membranes. The protein is Cholinephosphotransferase 1 of Rattus norvegicus (Rat).